Consider the following 349-residue polypeptide: Phosphoribosylformylglycinamidine cyclo-ligase (349 aa).

Belongs to the AIR synthase family.

It localises to the cytoplasm. It carries out the reaction 2-formamido-N(1)-(5-O-phospho-beta-D-ribosyl)acetamidine + ATP = 5-amino-1-(5-phospho-beta-D-ribosyl)imidazole + ADP + phosphate + H(+). Its pathway is purine metabolism; IMP biosynthesis via de novo pathway; 5-amino-1-(5-phospho-D-ribosyl)imidazole from N(2)-formyl-N(1)-(5-phospho-D-ribosyl)glycinamide: step 2/2. In Methanococcus vannielii (strain ATCC 35089 / DSM 1224 / JCM 13029 / OCM 148 / SB), this protein is Phosphoribosylformylglycinamidine cyclo-ligase.